A 346-amino-acid polypeptide reads, in one-letter code: Dimethylallyltranstransferase (346 aa).

3 residues coordinate isopentenyl diphosphate: Lys96, Arg99, and His128. Mg(2+) contacts are provided by Asp135 and Asp141. Arg147 is an isopentenyl diphosphate binding site.

The protein belongs to the FPP/GGPP synthase family. The cofactor is Mg(2+).

The enzyme catalyses isopentenyl diphosphate + dimethylallyl diphosphate = (2E)-geranyl diphosphate + diphosphate. It participates in isoprenoid biosynthesis; geranyl diphosphate biosynthesis; geranyl diphosphate from dimethylallyl diphosphate and isopentenyl diphosphate: step 1/1. Functionally, prenyltransferase involved in the biosynthesis of ambiguines, a family of hapalindole-type alkaloids. Catalyzes the addition of isopentenyl diphosphate (IPP) onto dimethylallyl diphosphate (DMAPP) to form geranyl pyrophosphate (GPP). Cannot use farnesyl diphosphate (FPP) or geranylgeranyl diphosphate (GGPP). The protein is Dimethylallyltranstransferase of Fischerella ambigua (strain UTEX 1903).